The primary structure comprises 241 residues: ATP-dependent Clp protease ATP-binding subunit CLPT2, chloroplastic (241 aa).

A chloroplast-targeting transit peptide spans M1–S75. Residues K91–G237 enclose the Clp R domain. 2 repeat regions span residues W94 to A159 and L171 to G237.

Belongs to the ClpA/ClpB family. Monomer and homodimer. The dimers monomerize before association to the P-ring. Component of the chloroplastic Clp protease core complex which consist of at least 16 proteins: CLPP4 (3 copies), CLPP5 (3 copies), CLPR4 (2 copies), ClpP1 (1 copy), CLPP6 (1 copy), CLPR2 (1 copy), CLPT1 (1 copy), CLPT2 (1 copy) and 3 copies of CLPP3 and/or CLPR1 and/or CLPR3. Interacts with AHK2. Interacts with CPN21. No interactions with CLPS1.

It is found in the plastid. The protein resides in the chloroplast. Functionally, accessory protein regulating the assembly of the plastidial Clp protease system. CLPT1 first binds to the heptameric P-ring containing the CLP3-6 subunits followed by CLPT2, and only then does the P-ring combine with the R-ring composed of the clpP1 and CLPR1-4 subunits. Once the core complex is fully assembled, it then associates to the CLPC chaperone partner to form the functional protease. CLPT2 and CLPT1 are partially redundant. This chain is ATP-dependent Clp protease ATP-binding subunit CLPT2, chloroplastic, found in Arabidopsis thaliana (Mouse-ear cress).